Consider the following 214-residue polypeptide: Adenylate kinase (214 aa).

10–15 (GTGKGT) serves as a coordination point for ATP. The tract at residues 30–59 (STGDILRENIQKKNTIGKKIHNILKNGELV) is NMP. Residues Thr-31, Arg-36, 57-59 (ELV), 85-88 (GFPR), and Gln-92 each bind AMP. An LID region spans residues 122–159 (GRRVHTPSGRIYNINYNPPREEGKDDLTQEKLTIREDD). ATP contacts are provided by residues Arg-123 and 132 to 133 (IY). Positions 156 and 167 each coordinate AMP. Residue Gln-200 participates in ATP binding.

The protein belongs to the adenylate kinase family. Monomer.

The protein localises to the cytoplasm. The catalysed reaction is AMP + ATP = 2 ADP. It participates in purine metabolism; AMP biosynthesis via salvage pathway; AMP from ADP: step 1/1. Its function is as follows. Catalyzes the reversible transfer of the terminal phosphate group between ATP and AMP. Plays an important role in cellular energy homeostasis and in adenine nucleotide metabolism. The sequence is that of Adenylate kinase from Buchnera aphidicola subsp. Schizaphis graminum (strain Sg).